The primary structure comprises 541 residues: EH domain-containing protein 4 (541 aa).

At Met-1 the chain carries N-acetylmethionine. The Dynamin-type G domain maps to 58 to 289 (FENKPMILLV…DLFRDIQSLP (232 aa)). Residues 68–75 (GQYSTGKT) are G1 motif. ATP is bound at residue 68-75 (GQYSTGKT). The G2 motif stretch occupies residues 94-95 (EP). Residues 156–159 (DSPG) form a G3 motif region. Position 162 is a phosphoserine (Ser-162). The segment at 222–225 (NKAD) is G4 motif. Lys-223 contributes to the ATP binding site. A region of interest (G5 motif) is located at residue Val-246. Trp-261 contacts ATP. Residues 447 to 535 (DKPVYDELFY…PHLVPPSHRK (89 aa)) form the EH domain. Tyr-451 carries the post-translational modification Phosphotyrosine. Position 459 is a phosphoserine (Ser-459). The EF-hand domain occupies 479–514 (LPNSVLGKIWKLADCDCDGMLDEEEFALAKHLIKIK). Ca(2+) contacts are provided by Asp-492, Asp-494, Asp-496, Met-498, and Glu-503.

It belongs to the TRAFAC class dynamin-like GTPase superfamily. Dynamin/Fzo/YdjA family. EHD subfamily. In terms of assembly, homooligomer, and heterooligomer with EHD1, EHD2 and EHD3. Forms a complex with EHD4 and MICALL1; the complex controls CDH5 trafficking and coordinates angiogenesis. In terms of tissue distribution, highly expressed in pancreas and heart.

It is found in the early endosome membrane. The protein localises to the recycling endosome membrane. It localises to the cell membrane. The protein resides in the cell junction. Its subcellular location is the adherens junction. Its function is as follows. ATP- and membrane-binding protein that probably controls membrane reorganization/tubulation upon ATP hydrolysis. Plays a role in early endosomal transport. During sprouting angiogenesis, in complex with PACSIN2 and MICALL1, forms recycling endosome-like tubular structure at asymmetric adherens junctions to control CDH5 trafficking. This Homo sapiens (Human) protein is EH domain-containing protein 4.